We begin with the raw amino-acid sequence, 89 residues long: Bombyxin B-2 (89 aa).

The first 19 residues, 1-19 (MKTSVMFMLVFVISLMCSS), serve as a signal peptide directing secretion. 3 cysteine pairs are disulfide-bonded: Cys-29–Cys-75, Cys-41–Cys-88, and Cys-74–Cys-79. A propeptide spans 48–66 (SGAQYAPYFWTRQYLGSRG) (c peptide like).

Belongs to the insulin family. As to quaternary structure, heterodimer of a B chain and an A chain linked by two disulfide bonds.

The protein resides in the secreted. Brain peptide responsible for activation of prothoracic glands to produce ecdysone in insects. The chain is Bombyxin B-2 (BBXB2) from Bombyx mori (Silk moth).